A 411-amino-acid polypeptide reads, in one-letter code: Protein PHLOEM PROTEIN 2-LIKE A5 (411 aa).

Positions 20 to 157 (TGPQVFINFR…KWTEALFSVC (138 aa)) constitute a TIR domain. The active site involves glutamate 94.

It carries out the reaction NAD(+) + H2O = ADP-D-ribose + nicotinamide + H(+). In Arabidopsis thaliana (Mouse-ear cress), this protein is Protein PHLOEM PROTEIN 2-LIKE A5 (PP2A5).